The sequence spans 200 residues: MSQPDNHSSRSASVSRRTSETDISIDLNLDGTGTHSISSGVVFLDHMLANFSKHAQIDITLTCKGDTDVDDHHSVEDIALVLGSALLQSLGDKKGIKRYGWSMIPMDEALARCALDLGGRSYSVFNATFNRSVVNGFSTEMVEHFFLSLSRTLHANIHISILEGQNTHHKIEAIFKAFAYALKDAISISGTGIPSTKGVI.

This sequence belongs to the imidazoleglycerol-phosphate dehydratase family.

The protein resides in the cytoplasm. The enzyme catalyses D-erythro-1-(imidazol-4-yl)glycerol 3-phosphate = 3-(imidazol-4-yl)-2-oxopropyl phosphate + H2O. The protein operates within amino-acid biosynthesis; L-histidine biosynthesis; L-histidine from 5-phospho-alpha-D-ribose 1-diphosphate: step 6/9. The sequence is that of Imidazoleglycerol-phosphate dehydratase from Prosthecochloris aestuarii (strain DSM 271 / SK 413).